A 271-amino-acid chain; its full sequence is Phthiotriol/phenolphthiotriol dimycocerosates methyltransferase 1 (271 aa).

Belongs to the methyltransferase superfamily. Phthiotriol/phenolphthiotriol dimycocerosates methyltransferase family.

Its function is as follows. Catalyzes the methylation of the lipid moiety of the intermediate compounds phthiotriol and glycosylated phenolphthiotriol dimycoserosates to form phthiocerol dimycocerosates (DIM A) and glycosylated phenolphthiocerol dimycocerosates (PGL). This chain is Phthiotriol/phenolphthiotriol dimycocerosates methyltransferase 1, found in Mycobacterium ulcerans (strain Agy99).